Consider the following 202-residue polypeptide: MSDKAAAPKKQGRNNGAVVLMCLSFVFGMGAMSYAAVPLYRIFCQVTGYNGTTQRVEQMSSVVLDRKMRVTFDANVAPGLQWDFKPVEREVNPRIGETIQVKFTAENRSNETQRGQAVFNVTPGEAGVYFNKVQCFCFTETDLKPGEKLEMPVVFYIDPEIVNAVESKDIHTVTLSYTFYPKEGPKPLASNEGGAEKVEKKL.

The Cytoplasmic portion of the chain corresponds to 1–13 (MSDKAAAPKKQGR). A helical; Signal-anchor for type II membrane protein transmembrane segment spans residues 14-36 (NNGAVVLMCLSFVFGMGAMSYAA). Topologically, residues 37-202 (VPLYRIFCQV…GGAEKVEKKL (166 aa)) are periplasmic. Positions 183 to 202 (EGPKPLASNEGGAEKVEKKL) are disordered.

It belongs to the COX11/CtaG family.

It is found in the cell inner membrane. Its function is as follows. Exerts its effect at some terminal stage of cytochrome c oxidase synthesis, probably by being involved in the insertion of the copper B into subunit I. The sequence is that of Cytochrome c oxidase assembly protein CtaG from Rhizobium etli (strain CIAT 652).